The following is a 355-amino-acid chain: Uroporphyrinogen decarboxylase (355 aa).

Substrate is bound by residues 27–31 (RQAGR), Asp78, Tyr155, Ser210, and His328.

It belongs to the uroporphyrinogen decarboxylase family. In terms of assembly, homodimer.

It localises to the cytoplasm. The enzyme catalyses uroporphyrinogen III + 4 H(+) = coproporphyrinogen III + 4 CO2. It functions in the pathway porphyrin-containing compound metabolism; protoporphyrin-IX biosynthesis; coproporphyrinogen-III from 5-aminolevulinate: step 4/4. Its function is as follows. Catalyzes the decarboxylation of four acetate groups of uroporphyrinogen-III to yield coproporphyrinogen-III. In Pseudomonas fluorescens (strain ATCC BAA-477 / NRRL B-23932 / Pf-5), this protein is Uroporphyrinogen decarboxylase.